A 1171-amino-acid polypeptide reads, in one-letter code: ATP-dependent helicase/deoxyribonuclease subunit B (1171 aa).

In terms of domain architecture, UvrD-like helicase ATP-binding spans 1 to 390 (MSLRFVIGRA…HPLVECIRSA (390 aa)). 8-15 (GRAGSGKS) is an ATP binding site. In terms of domain architecture, UvrD-like helicase C-terminal spans 281–587 (MEQPRFHSPA…QFANIPPSLD (307 aa)). 4 residues coordinate [4Fe-4S] cluster: cysteine 805, cysteine 1129, cysteine 1132, and cysteine 1138.

The protein belongs to the helicase family. AddB/RexB type 1 subfamily. Heterodimer of AddA and AddB. It depends on Mg(2+) as a cofactor. The cofactor is [4Fe-4S] cluster.

Its function is as follows. The heterodimer acts as both an ATP-dependent DNA helicase and an ATP-dependent, dual-direction single-stranded exonuclease. Recognizes the chi site generating a DNA molecule suitable for the initiation of homologous recombination. The AddB subunit has 5' -&gt; 3' nuclease activity but not helicase activity. In Bacillus cereus (strain ATCC 10987 / NRS 248), this protein is ATP-dependent helicase/deoxyribonuclease subunit B.